The following is a 226-amino-acid chain: UPF0173 metal-dependent hydrolase GWCH70_2696 (226 aa).

The protein belongs to the UPF0173 family.

This Geobacillus sp. (strain WCH70) protein is UPF0173 metal-dependent hydrolase GWCH70_2696.